We begin with the raw amino-acid sequence, 239 residues long: Uridylate kinase (239 aa).

13-16 (KLSG) contributes to the ATP binding site. G55 lines the UMP pocket. 2 residues coordinate ATP: G56 and R60. UMP contacts are provided by residues D75 and 136-143 (TGNPFFTT). Residues T163, Y169, and D172 each coordinate ATP.

The protein belongs to the UMP kinase family. Homohexamer.

Its subcellular location is the cytoplasm. It carries out the reaction UMP + ATP = UDP + ADP. It participates in pyrimidine metabolism; CTP biosynthesis via de novo pathway; UDP from UMP (UMPK route): step 1/1. With respect to regulation, inhibited by UTP. Its function is as follows. Catalyzes the reversible phosphorylation of UMP to UDP. This chain is Uridylate kinase, found in Chromobacterium violaceum (strain ATCC 12472 / DSM 30191 / JCM 1249 / CCUG 213 / NBRC 12614 / NCIMB 9131 / NCTC 9757 / MK).